Consider the following 286-residue polypeptide: D-tagatose-1,6-bisphosphate aldolase subunit KbaY (286 aa).

The active-site Proton donor is Asp-82. Zn(2+)-binding residues include His-83 and His-180. Gly-181 serves as a coordination point for dihydroxyacetone phosphate. Residue His-208 participates in Zn(2+) binding. Dihydroxyacetone phosphate contacts are provided by residues 209–211 (GAS) and 230–233 (NVAT).

It belongs to the class II fructose-bisphosphate aldolase family. TagBP aldolase KbaY subfamily. Homotetramer. Forms a complex with KbaZ. Zn(2+) is required as a cofactor.

It carries out the reaction D-tagatofuranose 1,6-bisphosphate = D-glyceraldehyde 3-phosphate + dihydroxyacetone phosphate. Its pathway is carbohydrate metabolism; D-tagatose 6-phosphate degradation; D-glyceraldehyde 3-phosphate and glycerone phosphate from D-tagatose 6-phosphate: step 2/2. Functionally, catalytic subunit of the tagatose-1,6-bisphosphate aldolase KbaYZ, which catalyzes the reversible aldol condensation of dihydroxyacetone phosphate (DHAP or glycerone-phosphate) with glyceraldehyde 3-phosphate (G3P) to produce tagatose 1,6-bisphosphate (TBP). Requires KbaZ subunit for full activity and stability. The chain is D-tagatose-1,6-bisphosphate aldolase subunit KbaY from Escherichia coli O17:K52:H18 (strain UMN026 / ExPEC).